Consider the following 208-residue polypeptide: Small ribosomal subunit protein eS8 (208 aa).

The disordered stretch occupies residues M1–K37. Residues W8–K26 show a composition bias toward basic residues.

It belongs to the eukaryotic ribosomal protein eS8 family. As to quaternary structure, component of the small ribosomal subunit. Identified in a IGF2BP1-dependent mRNP granule complex containing untranslated mRNAs. Part of the small subunit (SSU) processome, composed of more than 70 proteins and the RNA chaperone small nucleolar RNA (snoRNA) U3.

The protein resides in the cytoplasm. It is found in the membrane. Its subcellular location is the nucleus. The protein localises to the nucleolus. Functionally, component of the small ribosomal subunit. The ribosome is a large ribonucleoprotein complex responsible for the synthesis of proteins in the cell. Part of the small subunit (SSU) processome, first precursor of the small eukaryotic ribosomal subunit. During the assembly of the SSU processome in the nucleolus, many ribosome biogenesis factors, an RNA chaperone and ribosomal proteins associate with the nascent pre-rRNA and work in concert to generate RNA folding, modifications, rearrangements and cleavage as well as targeted degradation of pre-ribosomal RNA by the RNA exosome. The sequence is that of Small ribosomal subunit protein eS8 (rps8) from Xenopus laevis (African clawed frog).